Here is a 949-residue protein sequence, read N- to C-terminus: Coiled-coil domain-containing protein 66 (949 aa).

A phosphothreonine mark is found at threonine 115 and threonine 121. Position 369 is a phosphoserine (serine 369). Residues 474-558 (QVEEKCRKKQ…EQRIRELAQK (85 aa)) are a coiled coil. The mediates localization to cilia, centrosomes and spindle microtubules and the interaction with PCM1, CEP290, CEP104 and CSPP1 stretch occupies residues 570 to 949 (GVDTIQIEYN…NQEENFGSSF (380 aa)). Serine 606 carries the phosphoserine modification. 2 disordered regions span residues 691-714 (QTKH…KRYI) and 789-809 (SFSK…RTQQ).

Homodimer; disulfide-linked. Interacts with CEP290. Interacts with PCM1. Interacts with ARMC9, TOGARAM1, CSPP1 and CEP104. Interacts with CDK5RAP2, CEP152, CEP192, TBG1 and PRC1.

It localises to the cytoplasm. The protein localises to the cytoskeleton. Its subcellular location is the microtubule organizing center. The protein resides in the centrosome. It is found in the centriolar satellite. It localises to the cell projection. The protein localises to the cilium. Its subcellular location is the cilium basal body. The protein resides in the cilium axoneme. It is found in the photoreceptor inner segment. It localises to the photoreceptor outer segment. Its function is as follows. Microtubule-binding protein required for ciliogenesis. May function in ciliogenesis by mediating the transport of proteins like BBS4 to the cilium, but also through the organization of the centriolar satellites. Required for the assembly of signaling-competent cilia with proper structure and length. Mediates this function in part by regulating transition zone assembly and basal body recruitment of the IFT-B complex. Cooperates with the ciliopathy proteins CSPP1 and CEP104 during cilium length regulation. Plays two important roles during cell division. First, is required for mitotic progression via regulation of spindle assembly, organization and orientation, levels of spindle microtubules (MTs), kinetochore-fiber integrity, and chromosome alignment. Second, functions during cytokinesis in part by regulating assembly and organization of central spindle and midbody MTs Plays a role in retina morphogenesis and/or homeostasis. This is Coiled-coil domain-containing protein 66 from Pongo abelii (Sumatran orangutan).